Consider the following 680-residue polypeptide: Tumor protein 63 (680 aa).

The tract at residues 1 to 107 is transcription activation; it reads MNFETSRCAT…MQDSDLSDPM (107 aa). Positions 122–157 are enriched in polar residues; it reads QQIQNGSSSTSPYNTDHAQNSVTAPSPYAQPSSTFD. The interval 122–171 is disordered; that stretch reads QQIQNGSSSTSPYNTDHAQNSVTAPSPYAQPSSTFDALSPSPAIPSNTDY. Residues 170-362 mediate DNA binding; that stretch reads DYPGPHSFDV…KADEDSIRKQ (193 aa). The Zn(2+) site is built by Cys244, His247, Cys308, and Cys312. The span at 351–360 shows a compositional bias: basic and acidic residues; that stretch reads DRKADEDSIR. Disordered regions lie at residues 351–393 and 436–472; these read DRKA…IKKR and RQQQQQQHQHLLQKQTSMQSQSSYGNSSPPLNKMNSM. Residues 352-388 form an interaction with HIPK2 region; sequence RKADEDSIRKQQVSDSAKNGDGTKRPFRQNTHGIQMT. Over residues 379-389 the composition is skewed to polar residues; that stretch reads RQNTHGIQMTS. Residues 394–443 form an oligomerization region; that stretch reads RSPDDELLYLPVRGRETYEMLLKIKESLELMQYLPQHTIETYRQQQQQQH. Residues 437–463 are compositionally biased toward low complexity; it reads QQQQQQHQHLLQKQTSMQSQSSYGNSS. The 67-residue stretch at 541–607 folds into the SAM domain; that stretch reads PPYPTDCSIV…WKGILDHRQL (67 aa). The segment at 610–680 is transactivation inhibition; it reads FSSPPHLLRT…KQQRIKEEGE (71 aa). Lys676 participates in a covalent cross-link: Glycyl lysine isopeptide (Lys-Gly) (interchain with G-Cter in SUMO).

This sequence belongs to the p53 family. As to quaternary structure, binds DNA as a homotetramer. Isoform composition of the tetramer may determine transactivation activity. Interacts with HIPK2. Interacts with SSRP1, leading to stimulate coactivator activity. Interacts with WWP1. Interacts with PDS5A. Interacts (via activation domain) with NOC2L. It depends on Zn(2+) as a cofactor. May be sumoylated. Post-translationally, ubiquitinated. Polyubiquitination involves WWP1 and leads to proteasomal degradation of this protein. Widely expressed, notably in thymus, prostate, placenta, and skeletal muscle, although the precise isoform varies according to tissue type. Progenitor cell layers of skin, breast and prostate express high levels of DeltaN-type isoforms.

It is found in the nucleus. Acts as a sequence specific DNA binding transcriptional activator or repressor. The isoforms contain a varying set of transactivation and auto-regulating transactivation inhibiting domains thus showing an isoform specific activity. May be required in conjunction with TP73/p73 for initiation of p53/TP53 dependent apoptosis in response to genotoxic insults and the presence of activated oncogenes. Involved in Notch signaling by probably inducing JAG1 and JAG2. Activates RIPK4 transcription. Plays a role in the regulation of epithelial morphogenesis. The ratio of DeltaN-type and TA*-type isoforms may govern the maintenance of epithelial stem cell compartments and regulate the initiation of epithelial stratification from the undifferentiated embryonal ectoderm. Required for limb formation from the apical ectodermal ridge. Activates transcription of the p21 promoter. In Rattus norvegicus (Rat), this protein is Tumor protein 63 (Tp63).